A 190-amino-acid polypeptide reads, in one-letter code: Potassium-transporting ATPase KdpC subunit (190 aa).

A helical membrane pass occupies residues 13 to 33; sequence LLLILTLITGILYPIVTTGFA.

It belongs to the KdpC family. As to quaternary structure, the system is composed of three essential subunits: KdpA, KdpB and KdpC.

Its subcellular location is the cell inner membrane. Functionally, part of the high-affinity ATP-driven potassium transport (or Kdp) system, which catalyzes the hydrolysis of ATP coupled with the electrogenic transport of potassium into the cytoplasm. This subunit acts as a catalytic chaperone that increases the ATP-binding affinity of the ATP-hydrolyzing subunit KdpB by the formation of a transient KdpB/KdpC/ATP ternary complex. This chain is Potassium-transporting ATPase KdpC subunit, found in Leptospira interrogans serogroup Icterohaemorrhagiae serovar copenhageni (strain Fiocruz L1-130).